The sequence spans 240 residues: Ribonuclease PH (240 aa).

Residues Arg87 and 125 to 127 each bind phosphate; that span reads GTR.

The protein belongs to the RNase PH family. As to quaternary structure, homohexameric ring arranged as a trimer of dimers.

The enzyme catalyses tRNA(n+1) + phosphate = tRNA(n) + a ribonucleoside 5'-diphosphate. Phosphorolytic 3'-5' exoribonuclease that plays an important role in tRNA 3'-end maturation. Removes nucleotide residues following the 3'-CCA terminus of tRNAs; can also add nucleotides to the ends of RNA molecules by using nucleoside diphosphates as substrates, but this may not be physiologically important. Probably plays a role in initiation of 16S rRNA degradation (leading to ribosome degradation) during starvation. The sequence is that of Ribonuclease PH from Dictyoglomus turgidum (strain DSM 6724 / Z-1310).